The sequence spans 357 residues: DNA polymerase IV (357 aa).

Residues 4–185 (IIHCDCDCFY…LPVERLFGVG (182 aa)) form the UmuC domain. Residues Asp8 and Asp103 each coordinate Mg(2+). The active site involves Glu104.

The protein belongs to the DNA polymerase type-Y family. As to quaternary structure, monomer. It depends on Mg(2+) as a cofactor.

It localises to the cytoplasm. The enzyme catalyses DNA(n) + a 2'-deoxyribonucleoside 5'-triphosphate = DNA(n+1) + diphosphate. In terms of biological role, poorly processive, error-prone DNA polymerase involved in untargeted mutagenesis. Copies undamaged DNA at stalled replication forks, which arise in vivo from mismatched or misaligned primer ends. These misaligned primers can be extended by PolIV. Exhibits no 3'-5' exonuclease (proofreading) activity. May be involved in translesional synthesis, in conjunction with the beta clamp from PolIII. The polypeptide is DNA polymerase IV (Ralstonia nicotianae (strain ATCC BAA-1114 / GMI1000) (Ralstonia solanacearum)).